The sequence spans 268 residues: Hydroxyethylthiazole kinase (268 aa).

Residue methionine 47 participates in substrate binding. ATP contacts are provided by lysine 123 and threonine 170. Alanine 196 is a binding site for substrate.

This sequence belongs to the Thz kinase family. The cofactor is Mg(2+).

It catalyses the reaction 5-(2-hydroxyethyl)-4-methylthiazole + ATP = 4-methyl-5-(2-phosphooxyethyl)-thiazole + ADP + H(+). It participates in cofactor biosynthesis; thiamine diphosphate biosynthesis; 4-methyl-5-(2-phosphoethyl)-thiazole from 5-(2-hydroxyethyl)-4-methylthiazole: step 1/1. In terms of biological role, catalyzes the phosphorylation of the hydroxyl group of 4-methyl-5-beta-hydroxyethylthiazole (THZ). The chain is Hydroxyethylthiazole kinase from Finegoldia magna (strain ATCC 29328 / DSM 20472 / WAL 2508) (Peptostreptococcus magnus).